The following is a 379-amino-acid chain: All-trans-retinol dehydrogenase [NAD(+)] ADH4 (379 aa).

An N-acetylthreonine modification is found at threonine 1. Residues cysteine 46, histidine 68, cysteine 98, cysteine 101, cysteine 104, cysteine 112, and cysteine 179 each coordinate Zn(2+). Residues 204 to 209 (GLGGVG), aspartate 228, lysine 233, 297 to 299 (VGV), and arginine 374 each bind NAD(+).

Belongs to the zinc-containing alcohol dehydrogenase family. Class-II subfamily. In terms of assembly, homodimer. Zn(2+) is required as a cofactor.

The protein resides in the cytoplasm. The catalysed reaction is all-trans-retinol + NAD(+) = all-trans-retinal + NADH + H(+). The enzyme catalyses 9-cis-retinol + NAD(+) = 9-cis-retinal + NADH + H(+). It carries out the reaction 20-oxo-(5Z,8Z,11Z,14Z)-eicosatetraenoate + NAD(+) + H2O = (5Z,8Z,11Z,14Z)-eicosatetraenedioate + NADH + 2 H(+). It catalyses the reaction 20-hydroxy-(5Z,8Z,11Z,14Z)-eicosatetraenoate + NAD(+) = 20-oxo-(5Z,8Z,11Z,14Z)-eicosatetraenoate + NADH + H(+). The catalysed reaction is 1,4-benzoquinone + NADH + H(+) = hydroquinone + NAD(+). Its activity is regulated as follows. Oxidation of 20-HETE is inhibited by low concentrations of N-heptylformamide. Oxidation of 20-HETE is a decreased by 55-65% by either all-trans-retinol or all-trans-retinoic acid. Strongly inhibited by omega-hydroxy fatty acids. In terms of biological role, catalyzes the NAD-dependent oxidation of either all-trans-retinol or 9-cis-retinol. Also oxidizes long chain omega-hydroxy fatty acids, such as 20-HETE, producing both the intermediate aldehyde, 20-oxoarachidonate and the end product, a dicarboxylic acid, (5Z,8Z,11Z,14Z)-eicosatetraenedioate. Also catalyzes the reduction of benzoquinones. This is All-trans-retinol dehydrogenase [NAD(+)] ADH4 from Struthio camelus (Common ostrich).